The sequence spans 190 residues: Probable chemoreceptor glutamine deamidase CheD (190 aa).

The protein belongs to the CheD family.

It carries out the reaction L-glutaminyl-[protein] + H2O = L-glutamyl-[protein] + NH4(+). Its function is as follows. Probably deamidates glutamine residues to glutamate on methyl-accepting chemotaxis receptors (MCPs), playing an important role in chemotaxis. The polypeptide is Probable chemoreceptor glutamine deamidase CheD (Acidiphilium cryptum (strain JF-5)).